The primary structure comprises 227 residues: Ribose-5-phosphate isomerase A (227 aa).

Residues 26–29 (TGST), 82–85 (DGAD), and 95–98 (KGGG) contribute to the substrate site. Glu104 acts as the Proton acceptor in catalysis. Lys122 contacts substrate.

It belongs to the ribose 5-phosphate isomerase family. Homodimer.

It catalyses the reaction aldehydo-D-ribose 5-phosphate = D-ribulose 5-phosphate. It functions in the pathway carbohydrate degradation; pentose phosphate pathway; D-ribose 5-phosphate from D-ribulose 5-phosphate (non-oxidative stage): step 1/1. In terms of biological role, catalyzes the reversible conversion of ribose-5-phosphate to ribulose 5-phosphate. The chain is Ribose-5-phosphate isomerase A from Streptococcus equi subsp. zooepidemicus (strain H70).